Consider the following 88-residue polypeptide: Small ribosomal subunit protein uS17 (88 aa).

The protein belongs to the universal ribosomal protein uS17 family. In terms of assembly, part of the 30S ribosomal subunit.

Its function is as follows. One of the primary rRNA binding proteins, it binds specifically to the 5'-end of 16S ribosomal RNA. In Lactobacillus helveticus (strain DPC 4571), this protein is Small ribosomal subunit protein uS17.